The chain runs to 255 residues: Pimeloyl-[acyl-carrier protein] methyl ester esterase (255 aa).

The AB hydrolase-1 domain maps to 16–242 (LVLLHGWGMN…SSHAPFITEP (227 aa)). Substrate is bound by residues Trp22, 82-83 (SL), and 143-147 (FMALQ). Ser82 functions as the Nucleophile in the catalytic mechanism. Catalysis depends on residues Asp207 and His235. His235 contributes to the substrate binding site.

Belongs to the AB hydrolase superfamily. Carboxylesterase BioH family. Monomer.

Its subcellular location is the cytoplasm. The enzyme catalyses 6-carboxyhexanoyl-[ACP] methyl ester + H2O = 6-carboxyhexanoyl-[ACP] + methanol + H(+). The protein operates within cofactor biosynthesis; biotin biosynthesis. The physiological role of BioH is to remove the methyl group introduced by BioC when the pimeloyl moiety is complete. It allows to synthesize pimeloyl-ACP via the fatty acid synthetic pathway through the hydrolysis of the ester bonds of pimeloyl-ACP esters. In Vibrio vulnificus (strain YJ016), this protein is Pimeloyl-[acyl-carrier protein] methyl ester esterase.